The sequence spans 419 residues: UDP-N-acetylglucosamine 1-carboxyvinyltransferase (419 aa).

Phosphoenolpyruvate is bound at residue 22-23; sequence KN. Arg91 contacts UDP-N-acetyl-alpha-D-glucosamine. The active-site Proton donor is the Cys115. Cys115 is modified (2-(S-cysteinyl)pyruvic acid O-phosphothioketal). UDP-N-acetyl-alpha-D-glucosamine contacts are provided by residues 120–124, 160–163, Asp305, and Ile327; these read RPVDL and KVSV.

It belongs to the EPSP synthase family. MurA subfamily.

It localises to the cytoplasm. The enzyme catalyses phosphoenolpyruvate + UDP-N-acetyl-alpha-D-glucosamine = UDP-N-acetyl-3-O-(1-carboxyvinyl)-alpha-D-glucosamine + phosphate. It participates in cell wall biogenesis; peptidoglycan biosynthesis. In terms of biological role, cell wall formation. Adds enolpyruvyl to UDP-N-acetylglucosamine. This Tolumonas auensis (strain DSM 9187 / NBRC 110442 / TA 4) protein is UDP-N-acetylglucosamine 1-carboxyvinyltransferase.